Reading from the N-terminus, the 358-residue chain is 3'(2'),5'-bisphosphate nucleotidase 2 (358 aa).

D54 (proton acceptor) is an active-site residue. Positions 77, 141, 143, and 144 each coordinate Mg(2+). The active-site Proton acceptor is the T146. Adenosine 3',5'-bisphosphate is bound by residues T146, H243, S272, K275, R289, and D302. H243, S272, K275, R289, and D302 together coordinate AMP. Position 302 (D302) interacts with Mg(2+).

Belongs to the inositol monophosphatase superfamily. The cofactor is Mg(2+).

The enzyme catalyses 3'-phosphoadenylyl sulfate + H2O = adenosine 5'-phosphosulfate + phosphate. It catalyses the reaction adenosine 3',5'-bisphosphate + H2O = AMP + phosphate. The catalysed reaction is adenosine 2',5'-bisphosphate + H2O = AMP + phosphate. In terms of biological role, phosphatase that converts adenosine 3'-phosphate 5'-phosphosulfate (PAPS) to adenosine 5'-phosphosulfate (APS) and 3'(2')-phosphoadenosine 5'-phosphate (PAP) to AMP. Regulates the flux of sulfur in the sulfur-activation pathway by converting PAPS to APS. Involved in salt tolerance. This chain is 3'(2'),5'-bisphosphate nucleotidase 2 (HAL22), found in Candida albicans (strain SC5314 / ATCC MYA-2876) (Yeast).